We begin with the raw amino-acid sequence, 396 residues long: Pinosylvin synthase 1 (396 aa).

Residue 60–63 (KFKR) coordinates substrate. The active site involves cysteine 170. Substrate contacts are provided by residues leucine 273 and 311–313 (GGH).

It belongs to the thiolase-like superfamily. Chalcone/stilbene synthases family. Homodimer.

It localises to the cytoplasm. It carries out the reaction (E)-cinnamoyl-CoA + 3 malonyl-CoA + 3 H(+) = (E)-pinosylvin + 4 CO2 + 4 CoA. The enzyme catalyses 3-phenylpropanoyl-CoA + 3 malonyl-CoA + 3 H(+) = dihydropinosylvin + 4 CO2 + 4 CoA. Its pathway is phytoalexin biosynthesis; pinosylvin biosynthesis. Its function is as follows. Catalyzes the production of pinosylvin from cinnamoyl-CoA and malonyl-CoA, and dihydropinosylvin from dihydrocinnamoyl-CoA. This Pinus strobus (Eastern white pine) protein is Pinosylvin synthase 1.